A 141-amino-acid chain; its full sequence is Vesicle-associated membrane protein 4 (141 aa).

A disordered region spans residues 1–51; that stretch reads MPPKFKRHLNDDDVTGSVKSERRNLLEDDSDEEEDFFLRGPSGPRFGPRND. The Cytoplasmic segment spans residues 1–115; the sequence is MPPKFKRHLN…RRQMWWRGCK (115 aa). Ser17 and Ser30 each carry phosphoserine. A v-SNARE coiled-coil homology domain is found at 52–112; it reads KIKHVQNQVD…KQLRRQMWWR (61 aa). A helical; Anchor for type IV membrane protein membrane pass occupies residues 116-136; the sequence is IKAIMALVAVILLLVIIILIV. Residues 137–141 are Vesicular-facing; sequence VKYRT.

The protein belongs to the synaptobrevin family. Identified in a complex containing STX6, STX12, VAMP4 and VTI1A. Interacts with BAIAP3; this interaction is increased in the presence of calcium.

It localises to the golgi apparatus. Its subcellular location is the trans-Golgi network membrane. Its function is as follows. Involved in the pathway that functions to remove an inhibitor (probably synaptotagmin-4) of calcium-triggered exocytosis during the maturation of secretory granules. May be a marker for this sorting pathway that is critical for remodeling the secretory response of granule. The protein is Vesicle-associated membrane protein 4 (VAMP4) of Bos taurus (Bovine).